Reading from the N-terminus, the 105-residue chain is uncharacterized protein (105 aa).

Residues 1–27 (MSLKSWHPQSKTKRVGASEGNPQWGSG) form a disordered region.

This is an uncharacterized protein from Homo sapiens (Human).